The sequence spans 331 residues: Pyruvate synthase subunit PorB (331 aa).

[4Fe-4S] cluster-binding residues include Cys21, Cys24, Cys59, and Cys222.

As to quaternary structure, heterotetramer of one alpha, one beta, one delta and one gamma chain. It depends on [4Fe-4S] cluster as a cofactor.

It carries out the reaction 2 oxidized [2Fe-2S]-[ferredoxin] + pyruvate + CoA = 2 reduced [2Fe-2S]-[ferredoxin] + acetyl-CoA + CO2 + H(+). The protein is Pyruvate synthase subunit PorB (porB) of Pyrococcus horikoshii (strain ATCC 700860 / DSM 12428 / JCM 9974 / NBRC 100139 / OT-3).